The sequence spans 456 residues: 26S proteasome non-ATPase regulatory subunit 12 (456 aa).

A2 is modified (N-acetylalanine). A Glycyl lysine isopeptide (Lys-Gly) (interchain with G-Cter in SUMO1); alternate cross-link involves residue K92. A Glycyl lysine isopeptide (Lys-Gly) (interchain with G-Cter in SUMO2); alternate cross-link involves residue K92. Residues 242 to 420 (SICKHYRAIY…GVINFQRPKD (179 aa)) enclose the PCI domain. K368 bears the N6-acetyllysine mark.

It belongs to the proteasome subunit p55 family. Component of the 19S proteasome regulatory particle complex. The 26S proteasome consists of a 20S core particle (CP) and two 19S regulatory subunits (RP). The regulatory particle is made of a lid composed of 9 subunits including PSMD12, a base containing 6 ATPases and few additional components. Interacts with ERCC6.

Component of the 26S proteasome, a multiprotein complex involved in the ATP-dependent degradation of ubiquitinated proteins. This complex plays a key role in the maintenance of protein homeostasis by removing misfolded or damaged proteins, which could impair cellular functions, and by removing proteins whose functions are no longer required. Therefore, the proteasome participates in numerous cellular processes, including cell cycle progression, apoptosis, or DNA damage repair. In Mus musculus (Mouse), this protein is 26S proteasome non-ATPase regulatory subunit 12 (Psmd12).